We begin with the raw amino-acid sequence, 199 residues long: Recombination protein RecR (199 aa).

The C4-type zinc finger occupies 60–75; the sequence is CARCHTFTEGEVCSTC. Positions 83–178 constitute a Toprim domain; sequence SRLAVVETPA…HVTRLARGVP (96 aa).

It belongs to the RecR family.

In terms of biological role, may play a role in DNA repair. It seems to be involved in an RecBC-independent recombinational process of DNA repair. It may act with RecF and RecO. This is Recombination protein RecR from Paracidovorax citrulli (strain AAC00-1) (Acidovorax citrulli).